A 190-amino-acid polypeptide reads, in one-letter code: Protein GrpE (190 aa).

Belongs to the GrpE family. In terms of assembly, homodimer.

The protein localises to the cytoplasm. Its function is as follows. Participates actively in the response to hyperosmotic and heat shock by preventing the aggregation of stress-denatured proteins, in association with DnaK and GrpE. It is the nucleotide exchange factor for DnaK and may function as a thermosensor. Unfolded proteins bind initially to DnaJ; upon interaction with the DnaJ-bound protein, DnaK hydrolyzes its bound ATP, resulting in the formation of a stable complex. GrpE releases ADP from DnaK; ATP binding to DnaK triggers the release of the substrate protein, thus completing the reaction cycle. Several rounds of ATP-dependent interactions between DnaJ, DnaK and GrpE are required for fully efficient folding. The protein is Protein GrpE of Streptococcus agalactiae serotype III (strain NEM316).